The chain runs to 544 residues: Propane 2-monooxygenase, hydroxylase component large subunit (544 aa).

Glu97, Glu127, His130, Glu192, Glu226, and His229 together coordinate Fe cation.

It belongs to the TmoA/XamoA family. As to quaternary structure, the propane 2-monooxygenase multicomponent enzyme system is composed of an electron transfer component and a monooxygenase component interacting with the effector protein PrmD. The electron transfer component is composed of a reductase (PrmB), and the monooxygenase component is formed by a large subunit (PrmA) and a small subunit (PrmC). Probably requires the presence of the chaperonin-like protein PrmG to ensure a productive folding, resulting of a soluble PrmA, which leads to the active form of PrmABCD. The cofactor is Fe(2+).

It catalyses the reaction propane + NADH + O2 + H(+) = propan-2-ol + NAD(+) + H2O. In terms of biological role, component of the propane 2-monooxygenase multicomponent enzyme system which is involved in the degradation of propane via the O2-dependent hydroxylation of propane. Also able to catalyze the oxidation the water contaminant N-nitrosodimethylamine (NDMA). The protein is Propane 2-monooxygenase, hydroxylase component large subunit of Rhodococcus jostii (strain RHA1).